A 430-amino-acid chain; its full sequence is Glutamate-1-semialdehyde 2,1-aminomutase (430 aa).

Lys-265 bears the N6-(pyridoxal phosphate)lysine mark.

It belongs to the class-III pyridoxal-phosphate-dependent aminotransferase family. HemL subfamily. Homodimer. It depends on pyridoxal 5'-phosphate as a cofactor.

The protein localises to the cytoplasm. It carries out the reaction (S)-4-amino-5-oxopentanoate = 5-aminolevulinate. Its pathway is porphyrin-containing compound metabolism; protoporphyrin-IX biosynthesis; 5-aminolevulinate from L-glutamyl-tRNA(Glu): step 2/2. The protein is Glutamate-1-semialdehyde 2,1-aminomutase of Shewanella putrefaciens (strain CN-32 / ATCC BAA-453).